The primary structure comprises 464 residues: Argininosuccinate lyase (464 aa).

It belongs to the lyase 1 family. Argininosuccinate lyase subfamily.

The protein localises to the cytoplasm. The catalysed reaction is 2-(N(omega)-L-arginino)succinate = fumarate + L-arginine. It functions in the pathway amino-acid biosynthesis; L-arginine biosynthesis; L-arginine from L-ornithine and carbamoyl phosphate: step 3/3. The protein is Argininosuccinate lyase of Janthinobacterium sp. (strain Marseille) (Minibacterium massiliensis).